The chain runs to 128 residues: Cyclic ether formation enzyme gkaZ (128 aa).

The N-terminal stretch at 1–36 (MTTARALSDGLAYLLACFNAFCIQAHLTSRFSPAFS) is a signal peptide. 2 consecutive transmembrane segments (helical) span residues 61–81 (LRYM…LPGW) and 107–127 (WLLH…AIYV).

Belongs to the cyclic ether formation enzyme xenC family.

The protein resides in the membrane. It participates in mycotoxin biosynthesis. Functionally, cyclic ether formation enzyme; part of the gene cluster that mediates the biosynthesis of GKK1032, fungal natural products containing a macrocyclic para-cyclophane connected to a decahydrofluorene ring system that show potent antitumor activities. Within the pathway, gkaZ functions synergistically with gkaB and gkaX to form the cyclophane. The pathway begins with the PKS-NRPS gkaA which, with the help of the trans-enoyl reductase gkaC, synthesizes the polyketide-tyrosyl acyl thioester product which can be reductively off-loaded by the terminal reductase (R) domain in gkaA. The alpha/beta hydrolase gkaG is then required to catalyze the subsequent Knoevenagel condensation that affords the 3-pyrrolin-2-one ring, whereas the three proteins gkaB, gkaX and gkaZ then function synergistically to form the cyclophane. This chain is Cyclic ether formation enzyme gkaZ, found in Penicillium citrinum.